Consider the following 1148-residue polypeptide: MAYPNDVRNVWDVYNVFRDVPNREHLIRDIRNGLVTVRNLTNMLTNMERDDQLIIAQLSNMMKSLSIGVEKAQNELSKLKTTDADRAAVLAAYQTSVLNIERNTMLLTGYFKQLVLDLTGYVGASVYPILPFMITGDQSMMVDSVKVNMKNVFDDKHEQEIVLPIHPACFVSTITEDTSSVVYADGDELYSVHVRHATMTMYVNVLGETVETRQLSMIGESIVPDDFAPSLLILRFSQDSVGEVFYLSHGNMKKFLGYSLEYTDKCSIFDVARRVSTTRNTIPNGFCSVDGVPYLDGRFIYQPSGVSADSNICAIYNSYVLDTLRYITECEVDTLRSVYDQTSSTSFSKTDVLTSSLLTMQSNISALSAATPQLANDVITFDSTDLLSLGTVLTVSNEFTADDTILSTSLAGHCQVDYSEGSPQDKSMSISVSCDSSQLVSSTVHSYSADILGHGLKGDRTMNLMINVPGLMNPQKVTVDYVYSDGYKLNFASVVAPGAPFWINATLQLSVSPSAHNMLSKLTPLDNDACPGLKAQANTPILVSMTINLDDATPALGGEVIQNCVFKIHHGDDVYSFVTDFDVVSYTSTSGTNCLKLISSVDITSQLPSDMVIYVMNGSPDAAFTSGDSVNMSSVDWHQSTSQTVGNYVYTTMKAYWNVTSYDVEARPYTTYVPGKVNFTAVEHADVFVDDYNTGVNSYVIVNSRIYYKGTPLYIEVPSGSFIKVSYFTSPLKNPTVDTYNAEISRNSAYLIKANASLDSVATMLNNISNRIDAMERLMEPTRAQQIAGVVSSIGGVISLGMPLLGAIVVTIGTIISIADPDKQGIDYHSVANAFMSWCQYAAVCRYEYGLLKRGDEKLDVLSFMPKRVVSDFKNKPDVISLPELGESVLRGSSTDYLDTGINIIYNDMQLLGQGKLSGWLNKTVSKVENNAANFFERNLVKSLANKEVLPMHARVEITQTEKIGDVYRTTILYTGINEGSYLGGDVFASRLGDKNILRMNGFESGPGRFKAIVESTTEVGNFRVVDWTVSGMSRYEIYAAAGEIYPSKDPSHADVQLLYESIVRDLTTRDGSFVLKHHDVLLLPGQLDAFEELIIRNASNYQYAFIGSNCQNYAHDVVDILTKFKRPQRWIKDDDFKLYIQSIYDAL.

Residues 929-1148 form the PPPDE domain; it reads ENNAANFFER…LYIQSIYDAL (220 aa). Residues H953 and C1111 contribute to the active site.

This sequence belongs to the phytoreovirus minor outer capsid protein P2 family. As to quaternary structure, interacts with host ent-kaurene oxidases OSKO1, OSKO2, OSKOL4 and OSKOL5; this interaction.

The protein localises to the virion. It is found in the host cytoplasm. Functionally, minor capsid protein present in the outer capsid, which is required for adsorption of the virus onto host insect cells (Potential). Could play a role in the host plant virus induced dwarfism. This is Minor outer capsid protein P2 from Rice dwarf virus (isolate O) (RDV).